Here is a 279-residue protein sequence, read N- to C-terminus: Pantothenate synthetase (279 aa).

26-33 (MGNLHEGH) is a binding site for ATP. Residue histidine 33 is the Proton donor of the active site. Glutamine 57 serves as a coordination point for (R)-pantoate. A beta-alanine-binding site is contributed by glutamine 57. 144–147 (GKKD) lines the ATP pocket. Glutamine 150 is a (R)-pantoate binding site. ATP is bound by residues valine 173 and 181 to 184 (LSSR).

The protein belongs to the pantothenate synthetase family. In terms of assembly, homodimer.

The protein localises to the cytoplasm. It catalyses the reaction (R)-pantoate + beta-alanine + ATP = (R)-pantothenate + AMP + diphosphate + H(+). It participates in cofactor biosynthesis; (R)-pantothenate biosynthesis; (R)-pantothenate from (R)-pantoate and beta-alanine: step 1/1. Its function is as follows. Catalyzes the condensation of pantoate with beta-alanine in an ATP-dependent reaction via a pantoyl-adenylate intermediate. The protein is Pantothenate synthetase of Burkholderia vietnamiensis (strain G4 / LMG 22486) (Burkholderia cepacia (strain R1808)).